The primary structure comprises 199 residues: A-type ATP synthase subunit E (199 aa).

It belongs to the V-ATPase E subunit family. As to quaternary structure, has multiple subunits with at least A(3), B(3), C, D, E, F, H, I and proteolipid K(x).

It is found in the cell membrane. Its function is as follows. Component of the A-type ATP synthase that produces ATP from ADP in the presence of a proton gradient across the membrane. The polypeptide is A-type ATP synthase subunit E (Pyrococcus abyssi (strain GE5 / Orsay)).